Consider the following 358-residue polypeptide: Peptide chain release factor 1 (358 aa).

N5-methylglutamine is present on Q235.

This sequence belongs to the prokaryotic/mitochondrial release factor family. Post-translationally, methylated by PrmC. Methylation increases the termination efficiency of RF1.

The protein resides in the cytoplasm. Functionally, peptide chain release factor 1 directs the termination of translation in response to the peptide chain termination codons UAG and UAA. The polypeptide is Peptide chain release factor 1 (Neisseria gonorrhoeae (strain ATCC 700825 / FA 1090)).